Reading from the N-terminus, the 229-residue chain is Enolase-phosphatase E1 (229 aa).

It belongs to the HAD-like hydrolase superfamily. MasA/MtnC family. Monomer. It depends on Mg(2+) as a cofactor.

It catalyses the reaction 5-methylsulfanyl-2,3-dioxopentyl phosphate + H2O = 1,2-dihydroxy-5-(methylsulfanyl)pent-1-en-3-one + phosphate. It participates in amino-acid biosynthesis; L-methionine biosynthesis via salvage pathway; L-methionine from S-methyl-5-thio-alpha-D-ribose 1-phosphate: step 3/6. It functions in the pathway amino-acid biosynthesis; L-methionine biosynthesis via salvage pathway; L-methionine from S-methyl-5-thio-alpha-D-ribose 1-phosphate: step 4/6. Its function is as follows. Bifunctional enzyme that catalyzes the enolization of 2,3-diketo-5-methylthiopentyl-1-phosphate (DK-MTP-1-P) into the intermediate 2-hydroxy-3-keto-5-methylthiopentenyl-1-phosphate (HK-MTPenyl-1-P), which is then dephosphorylated to form the acireductone 1,2-dihydroxy-3-keto-5-methylthiopentene (DHK-MTPene). This chain is Enolase-phosphatase E1, found in Serratia proteamaculans (strain 568).